A 152-amino-acid chain; its full sequence is Superoxide dismutase [Cu-Zn] 4A (152 aa).

Cu cation is bound by residues H45, H47, and H62. Cysteines 56 and 145 form a disulfide. Residues H62, H70, H79, and D82 each coordinate Zn(2+). H119 is a binding site for Cu cation.

Belongs to the Cu-Zn superoxide dismutase family. Homodimer. The cofactor is Cu cation. Requires Zn(2+) as cofactor.

The protein localises to the cytoplasm. The enzyme catalyses 2 superoxide + 2 H(+) = H2O2 + O2. In terms of biological role, destroys radicals which are normally produced within the cells and which are toxic to biological systems. This Zea mays (Maize) protein is Superoxide dismutase [Cu-Zn] 4A (SODCC.3).